We begin with the raw amino-acid sequence, 171 residues long: Shikimate kinase (171 aa).

14–19 (GAGKST) contributes to the ATP binding site. Residue serine 18 coordinates Mg(2+). 3 residues coordinate substrate: aspartate 36, arginine 60, and glycine 82. ATP is bound at residue arginine 120. A substrate-binding site is contributed by arginine 139. Glutamine 156 provides a ligand contact to ATP.

Belongs to the shikimate kinase family. As to quaternary structure, monomer. The cofactor is Mg(2+).

It is found in the cytoplasm. It carries out the reaction shikimate + ATP = 3-phosphoshikimate + ADP + H(+). It functions in the pathway metabolic intermediate biosynthesis; chorismate biosynthesis; chorismate from D-erythrose 4-phosphate and phosphoenolpyruvate: step 5/7. Functionally, catalyzes the specific phosphorylation of the 3-hydroxyl group of shikimic acid using ATP as a cosubstrate. This Shewanella oneidensis (strain ATCC 700550 / JCM 31522 / CIP 106686 / LMG 19005 / NCIMB 14063 / MR-1) protein is Shikimate kinase.